The chain runs to 105 residues: Large ribosomal subunit protein uL24 (105 aa).

Belongs to the universal ribosomal protein uL24 family. Part of the 50S ribosomal subunit.

Functionally, one of two assembly initiator proteins, it binds directly to the 5'-end of the 23S rRNA, where it nucleates assembly of the 50S subunit. One of the proteins that surrounds the polypeptide exit tunnel on the outside of the subunit. The protein is Large ribosomal subunit protein uL24 of Staphylococcus epidermidis (strain ATCC 35984 / DSM 28319 / BCRC 17069 / CCUG 31568 / BM 3577 / RP62A).